Consider the following 1077-residue polypeptide: Ubiquitin carboxyl-terminal hydrolase 28 (1077 aa).

Positions 60–80 are disordered; sequence DERVKEPSQDTVATEPSEVEG. Phosphoserine is present on S67. Residues 97 to 116 enclose the UIM domain; sequence DNKDDLQAAIALSLLESPKI. Residue K99 forms a Glycyl lysine isopeptide (Lys-Gly) (interchain with G-Cter in SUMO2) linkage. In terms of domain architecture, USP spans 162–650; the sequence is VGLKNVGNTC…SAYCLMYIND (489 aa). The Nucleophile role is filled by C171. The residue at position 375 (S375) is a Phosphoserine. The tract at residues 477 to 535 is disordered; sequence HCSVSDQTSKESTSTESSSQDVESTFSSPEDSLPKSKPLTSSRSSMEMPSQPAPRTVTD. The segment covering 481–501 has biased composition (low complexity); sequence SDQTSKESTSTESSSQDVEST. The span at 514–524 shows a compositional bias: polar residues; the sequence is PLTSSRSSMEM. Residue S550 is modified to Phosphoserine. Catalysis depends on H600, which acts as the Proton acceptor. The tract at residues 697–728 is disordered; that stretch reads EEQSCKIPQMESSTNSSSQDYSTSQEPSVASS. Residues 707–724 are compositionally biased toward low complexity; sequence ESSTNSSSQDYSTSQEPS. A Phosphoserine modification is found at S714. Residue K759 forms a Glycyl lysine isopeptide (Lys-Gly) (interchain with G-Cter in SUMO2) linkage. Phosphothreonine is present on T1048.

It belongs to the peptidase C19 family. USP28 subfamily. As to quaternary structure, interacts with ZNF304. Interacts with PRKD1. Interacts with TP53BP1. Interacts with isoform 1 of FBXW7; following DNA damage, dissociates from FBXW7 leading to degradation of MYC. In terms of processing, degraded upon nickel ion level or hypoxia exposure. Post-translationally, phosphorylated upon DNA damage at Ser-67 and Ser-714, by ATM or ATR. Phosphorylated by PRKD1.

It localises to the nucleus. It is found in the nucleoplasm. The catalysed reaction is Thiol-dependent hydrolysis of ester, thioester, amide, peptide and isopeptide bonds formed by the C-terminal Gly of ubiquitin (a 76-residue protein attached to proteins as an intracellular targeting signal).. In terms of biological role, deubiquitinase involved in DNA damage response checkpoint and MYC proto-oncogene stability. Involved in DNA damage induced apoptosis by specifically deubiquitinating proteins of the DNA damage pathway such as CLSPN. Also involved in G2 DNA damage checkpoint, by deubiquitinating CLSPN, and preventing its degradation by the anaphase promoting complex/cyclosome (APC/C). In contrast, it does not deubiquitinate PLK1. Specifically deubiquitinates MYC in the nucleoplasm, leading to prevent MYC degradation by the proteasome: acts by specifically interacting with isoform 1 of FBXW7 (FBW7alpha) in the nucleoplasm and counteracting ubiquitination of MYC by the SCF(FBW7) complex. In contrast, it does not interact with isoform 4 of FBXW7 (FBW7gamma) in the nucleolus, allowing MYC degradation and explaining the selective MYC degradation in the nucleolus. Deubiquitinates ZNF304, hence preventing ZNF304 degradation by the proteasome and leading to the activated KRAS-mediated promoter hypermethylation and transcriptional silencing of tumor suppressor genes (TSGs) in a subset of colorectal cancers (CRC) cells. This chain is Ubiquitin carboxyl-terminal hydrolase 28 (USP28), found in Homo sapiens (Human).